The chain runs to 274 residues: Proliferating cell nuclear antigen 1 (274 aa).

Residues 61 to 80 (RCDRERVLGVNIASLNKVFK) mediate DNA binding.

It belongs to the PCNA family. Homotrimer. Interacts with ORC1 (via PIP-box motif); the interaction occurs during DNA replication in trophozoites. Interacts with ORC5; the interaction occurs during the trophozoite stage but not at the late schizont stage. Interacts with FEN1.

The protein localises to the nucleus. Its subcellular location is the chromosome. It is found in the cytoplasm. Its function is as follows. Auxiliary protein of DNA polymerase delta and is involved in the control of DNA replication by increasing the polymerase processibility during elongation of the leading strand. Involved in DNA damage response. The polypeptide is Proliferating cell nuclear antigen 1 (Plasmodium falciparum (isolate 3D7)).